Consider the following 363-residue polypeptide: UDP-N-acetylglucosamine--N-acetylmuramyl-(pentapeptide) pyrophosphoryl-undecaprenol N-acetylglucosamine transferase (363 aa).

UDP-N-acetyl-alpha-D-glucosamine-binding positions include 10–12 (TGG), Asn124, Ser195, Ile248, and Gln293.

The protein belongs to the glycosyltransferase 28 family. MurG subfamily.

The protein localises to the cell membrane. The catalysed reaction is Mur2Ac(oyl-L-Ala-gamma-D-Glu-L-Lys-D-Ala-D-Ala)-di-trans,octa-cis-undecaprenyl diphosphate + UDP-N-acetyl-alpha-D-glucosamine = beta-D-GlcNAc-(1-&gt;4)-Mur2Ac(oyl-L-Ala-gamma-D-Glu-L-Lys-D-Ala-D-Ala)-di-trans,octa-cis-undecaprenyl diphosphate + UDP + H(+). It participates in cell wall biogenesis; peptidoglycan biosynthesis. In terms of biological role, cell wall formation. Catalyzes the transfer of a GlcNAc subunit on undecaprenyl-pyrophosphoryl-MurNAc-pentapeptide (lipid intermediate I) to form undecaprenyl-pyrophosphoryl-MurNAc-(pentapeptide)GlcNAc (lipid intermediate II). The chain is UDP-N-acetylglucosamine--N-acetylmuramyl-(pentapeptide) pyrophosphoryl-undecaprenol N-acetylglucosamine transferase from Lacticaseibacillus casei (strain BL23) (Lactobacillus casei).